The chain runs to 337 residues: GTP 3',8-cyclase (337 aa).

Residues 17–243 (PFQRQYYYLR…HKSHTDGPAK (227 aa)) form the Radical SAM core domain. Arg-26 lines the GTP pocket. 2 residues coordinate [4Fe-4S] cluster: Cys-33 and Cys-37. S-adenosyl-L-methionine is bound at residue Tyr-39. Cys-40 serves as a coordination point for [4Fe-4S] cluster. Residue Arg-76 coordinates GTP. Gly-80 provides a ligand contact to S-adenosyl-L-methionine. Position 107 (Thr-107) interacts with GTP. An S-adenosyl-L-methionine-binding site is contributed by Ser-131. GTP is bound at residue Lys-168. Met-202 is a binding site for S-adenosyl-L-methionine. [4Fe-4S] cluster-binding residues include Cys-265 and Cys-268. 270–272 (RLR) provides a ligand contact to GTP. Cys-282 serves as a coordination point for [4Fe-4S] cluster.

This sequence belongs to the radical SAM superfamily. MoaA family. As to quaternary structure, monomer and homodimer. [4Fe-4S] cluster is required as a cofactor.

The catalysed reaction is GTP + AH2 + S-adenosyl-L-methionine = (8S)-3',8-cyclo-7,8-dihydroguanosine 5'-triphosphate + 5'-deoxyadenosine + L-methionine + A + H(+). Its pathway is cofactor biosynthesis; molybdopterin biosynthesis. Its function is as follows. Catalyzes the cyclization of GTP to (8S)-3',8-cyclo-7,8-dihydroguanosine 5'-triphosphate. This Haemophilus influenzae (strain ATCC 51907 / DSM 11121 / KW20 / Rd) protein is GTP 3',8-cyclase.